Here is a 359-residue protein sequence, read N- to C-terminus: Probable mannitol dehydrogenase (359 aa).

Residues Cys48, His70, Cys101, Cys104, Cys107, Cys115, and Cys164 each coordinate Zn(2+).

It belongs to the zinc-containing alcohol dehydrogenase family. Requires Zn(2+) as cofactor.

The catalysed reaction is D-mannitol + NAD(+) = D-mannose + NADH + H(+). Oxidizes mannitol to mannose. Provides the initial step by which translocated mannitol is committed to central metabolism and, by regulating mannitol pool size, is important in regulating salt tolerance at the cellular level. The chain is Probable mannitol dehydrogenase (CAD) from Fragaria ananassa (Strawberry).